The following is a 51-amino-acid chain: Large ribosomal subunit protein eL40 (51 aa).

Zn(2+) is bound by residues C17, C20, C31, and C34.

The protein belongs to the eukaryotic ribosomal protein eL40 family. As to quaternary structure, part of the 50S ribosomal subunit. Zn(2+) is required as a cofactor.

The chain is Large ribosomal subunit protein eL40 from Thermococcus kodakarensis (strain ATCC BAA-918 / JCM 12380 / KOD1) (Pyrococcus kodakaraensis (strain KOD1)).